Reading from the N-terminus, the 321-residue chain is MVHHNVTIIGSGPAAHTAAIYLSRAEIKPTLYEGMLANGTAAGGQLTTTTDVENFPGFPKGINGTELMDQMREQSVRFGTDIITETISKCDLSSRPFKLWTEWNEDSEPITTDAVVIATGASAKRMHLPGEDTYWQQGISACAVCDGAVPIFRNKPLAVVGGGDSACEEALFLTKYGSKVYLLVRRDQLRASNIMQKRVQNNDKLEILWNSEAKEAKGDGKLLQNISVYNNKTKETKDLPVNGLFYAIGHIPATQIFAKQLETDDQNYILTKPGTAETSIPGVFAAGDVQDKRYRQAITSAGTGCMAALDCEKFLSEEEAK.

FAD-binding positions include 11–14 (SGPA), 40–41 (TA), Gln-45, Asn-54, Cys-145, Asp-288, and 295–297 (RQA). Cysteines 142 and 145 form a disulfide.

It belongs to the class-II pyridine nucleotide-disulfide oxidoreductase family. In terms of assembly, homodimer. It depends on FAD as a cofactor.

The protein localises to the cytoplasm. The enzyme catalyses [thioredoxin]-dithiol + NADP(+) = [thioredoxin]-disulfide + NADPH + H(+). The polypeptide is Thioredoxin reductase (TRR1) (Debaryomyces hansenii (strain ATCC 36239 / CBS 767 / BCRC 21394 / JCM 1990 / NBRC 0083 / IGC 2968) (Yeast)).